The sequence spans 273 residues: Putative pyruvate, phosphate dikinase regulatory protein (273 aa).

151-158 (GVSRTSKT) serves as a coordination point for ADP.

It belongs to the pyruvate, phosphate/water dikinase regulatory protein family. PDRP subfamily.

It catalyses the reaction N(tele)-phospho-L-histidyl/L-threonyl-[pyruvate, phosphate dikinase] + ADP = N(tele)-phospho-L-histidyl/O-phospho-L-threonyl-[pyruvate, phosphate dikinase] + AMP + H(+). The catalysed reaction is N(tele)-phospho-L-histidyl/O-phospho-L-threonyl-[pyruvate, phosphate dikinase] + phosphate + H(+) = N(tele)-phospho-L-histidyl/L-threonyl-[pyruvate, phosphate dikinase] + diphosphate. Bifunctional serine/threonine kinase and phosphorylase involved in the regulation of the pyruvate, phosphate dikinase (PPDK) by catalyzing its phosphorylation/dephosphorylation. In Desulfitobacterium hafniense (strain Y51), this protein is Putative pyruvate, phosphate dikinase regulatory protein.